Consider the following 111-residue polypeptide: Prothymosin alpha (111 aa).

Met-1 bears the N-acetylmethionine mark. The tract at residues 1–111 (MSDAAVDTSS…TKKQKTDEDD (111 aa)) is disordered. Ser-2 is subject to N-acetylserine; in Prothymosin alpha, N-terminally processed. Ser-2 is modified (phosphoserine). The residue at position 8 (Thr-8) is a Phosphothreonine. 2 positions are modified to phosphoserine: Ser-9 and Ser-10. 2 positions are modified to phosphothreonine: Thr-13 and Thr-14. Residues 13–31 (TTKDLKEKKEVVEEAENGR) are compositionally biased toward basic and acidic residues. An N6-acetyllysine; alternate modification is found at Lys-15. Position 15 is an N6-succinyllysine; alternate (Lys-15). The span at 40–84 (ENEENGEQEADNEVDEEEEEGGEEEEEEEEGDGEEEDGDEDEEAE) shows a compositional bias: acidic residues. The span at 101–111 (DTKKQKTDEDD) shows a compositional bias: basic and acidic residues. Thr-102 bears the Phosphothreonine mark. Lys-103 is subject to N6-acetyllysine; alternate. Residue Lys-103 forms a Glycyl lysine isopeptide (Lys-Gly) (interchain with G-Cter in SUMO2); alternate linkage. Thr-107 is subject to Phosphothreonine.

Belongs to the pro/parathymosin family. As to quaternary structure, interacts with NUPR1; regulates apoptotic process. Covalently linked to a small RNA of about 20 nucleotides.

Its subcellular location is the nucleus. Functionally, prothymosin alpha may mediate immune function by conferring resistance to certain opportunistic infections. This Homo sapiens (Human) protein is Prothymosin alpha (PTMA).